The following is a 315-amino-acid chain: MTLLAQLPTVRGKYIEAAPLKGLTWLRVGGPADVLYLPADESDLCRFLAETPDEIPVTVLGAGSNTLVRDGGVPGVVIRLAGAFAKTEALDGYRLRAGAGALDKMVAKAAAKAGIGGLEYLVGVPGTIGGALRMNAGCYDQETSDVVVEVIALDRMGRRIIASPDELAYSYRHCEAPEDWIFTGAVFQGQADDPDAITKRMNAITARRETTQPIREKTSGSTFANPDPPGTPNQRKSWELIDSVGGRGYRVGGAHFSEQHCNFLINDGTASAADLEQVGEDVRARVRQQHDIELRWEVRRIGRVSGDQKQEGQAG.

An FAD-binding PCMH-type domain is found at 27–207 (RVGGPADVLY…TKRMNAITAR (181 aa)). Arg-172 is a catalytic residue. Residues 214–236 (IREKTSGSTFANPDPPGTPNQRK) are disordered. Ser-221 (proton donor) is an active-site residue. Glu-297 is a catalytic residue.

It belongs to the MurB family. Requires FAD as cofactor.

Its subcellular location is the cytoplasm. The enzyme catalyses UDP-N-acetyl-alpha-D-muramate + NADP(+) = UDP-N-acetyl-3-O-(1-carboxyvinyl)-alpha-D-glucosamine + NADPH + H(+). It participates in cell wall biogenesis; peptidoglycan biosynthesis. In terms of biological role, cell wall formation. The chain is UDP-N-acetylenolpyruvoylglucosamine reductase from Maricaulis maris (strain MCS10) (Caulobacter maris).